Here is a 328-residue protein sequence, read N- to C-terminus: Fructokinase-2 (328 aa).

This sequence belongs to the carbohydrate kinase PfkB family.

It catalyses the reaction D-fructose + ATP = D-fructose 6-phosphate + ADP + H(+). It functions in the pathway glycan biosynthesis; starch biosynthesis. In terms of biological role, may play an important role in maintaining the flux of carbon towards starch formation. The chain is Fructokinase-2 (FRK2) from Solanum habrochaites (Wild tomato).